The following is a 249-amino-acid chain: Acetate transporter protein patA (249 aa).

6 helical membrane-spanning segments follow: residues 42 to 62 (IGSP…TLSM), 71 to 91 (AITN…LVLV), 106 to 126 (VFGG…PAFG), 141 to 161 (AIGY…VAAM), 169 to 189 (GMLG…FSFA), and 202 to 222 (AAGA…GHLM).

Belongs to the acetate uptake transporter (AceTr) (TC 2.A.96) family.

It localises to the endoplasmic reticulum membrane. The protein operates within mycotoxin biosynthesis; patulin biosynthesis. In terms of biological role, acetate transporter protein; part of the gene cluster that mediates the biosynthesis of patulin, an acetate-derived tetraketide mycotoxin produced by several fungal species that shows antimicrobial properties against several bacteria. May be involved in the uptake of acetate, a substrate for the synthesis of 6-methylsalicylic acid by the polyketide synthase patK. In Penicillium expansum (Blue mold rot fungus), this protein is Acetate transporter protein patA.